The following is a 652-amino-acid chain: Bifunctional protein ThiO/ThiG (652 aa).

The thiO stretch occupies residues 1 to 366 (MTRDIVIIGG…HYSRFQKQAS (366 aa)). Residues 5 to 19 (IVIIGGGVIGLAIAV) and 44 to 46 (AGM) contribute to the FAD site. Residue Glu-52 coordinates glycine. Val-173 is a binding site for FAD. Residues Arg-301 and Arg-327 each contribute to the glycine site. An FAD-binding site is contributed by 325-331 (HYRNGIL). Residues 393 to 652 (SLIIAGKSFH…ASSPVTGTIS (260 aa)) form a thiG region. Lys-494 functions as the Schiff-base intermediate with DXP in the catalytic mechanism. 1-deoxy-D-xylulose 5-phosphate contacts are provided by residues Gly-555, 581–582 (AG), and 603–604 (NS).

It in the N-terminal section; belongs to the DAO family. ThiO subfamily. This sequence in the C-terminal section; belongs to the ThiG family. Interacts with ThiH and ThiS. FAD serves as cofactor.

Its subcellular location is the cytoplasm. It catalyses the reaction glycine + O2 + H2O = glyoxylate + H2O2 + NH4(+). It carries out the reaction [ThiS sulfur-carrier protein]-C-terminal-Gly-aminoethanethioate + 2-iminoacetate + 1-deoxy-D-xylulose 5-phosphate = [ThiS sulfur-carrier protein]-C-terminal Gly-Gly + 2-[(2R,5Z)-2-carboxy-4-methylthiazol-5(2H)-ylidene]ethyl phosphate + 2 H2O + H(+). It participates in cofactor biosynthesis; thiamine diphosphate biosynthesis. Catalyzes the FAD-dependent oxidative deamination of glycine. Is essential for thiamine biosynthesis since the oxidation of glycine catalyzed by ThiO generates the glycine imine intermediate (dehydroglycine) required for the biosynthesis of the thiazole ring of thiamine pyrophosphate. Its function is as follows. Catalyzes the rearrangement of 1-deoxy-D-xylulose 5-phosphate (DXP) to produce the thiazole phosphate moiety of thiamine. Sulfur is provided by the thiocarboxylate moiety of the carrier protein ThiS. In vitro, sulfur can be provided by H(2)S. The polypeptide is Bifunctional protein ThiO/ThiG (thiO/thiG) (Trichormus variabilis (strain ATCC 29413 / PCC 7937) (Anabaena variabilis)).